A 61-amino-acid chain; its full sequence is MDIKTLREKSADELKAHLIDLRKEQFSVRMQQVTGQLPKTHDIRRVRREIARVKTLLGSTK.

It belongs to the universal ribosomal protein uL29 family.

In Stenotrophomonas maltophilia (strain K279a), this protein is Large ribosomal subunit protein uL29.